The following is a 61-amino-acid chain: Putative neurotoxin-D (61 aa).

The N-terminal stretch at 1-19 (MRTTVAILLVLFALSAILA) is a signal peptide. Cystine bridges form between C31-C51, C37-C56, and C39-C58.

As to expression, expressed by the venom gland.

The protein resides in the secreted. This is Putative neurotoxin-D from Lychas mucronatus (Chinese swimming scorpion).